The chain runs to 324 residues: Short chain dehydrogenase/reductase dmxR8 (324 aa).

NADP(+) contacts are provided by L33, K58, D83, and N110. Catalysis depends on S163, which acts as the Proton donor. Residues Y200 and K204 each contribute to the NADP(+) site. The active-site Proton acceptor is Y200. The active-site Lowers pKa of active site Tyr is K204.

Belongs to the short-chain dehydrogenases/reductases (SDR) family.

It functions in the pathway secondary metabolite biosynthesis. In terms of biological role, short chain dehydrogenase; part of the gene cluster that mediates the biosynthesis of the dimeric xanthones cryptosporioptides. The pathway begins with the synthesis of atrochrysone thioester by the polyketide synthase dmx-nrPKS. The atrochrysone carboxyl ACP thioesterase dmxR1 then breaks the thioester bond and releases the atrochrysone carboxylic acid from dmx-nrPKS. Atrochrysone carboxylic acid is decarboxylated by the decarboxylase dmxR15, and oxidized by the anthrone oxygenase dmxR16 to yield emodin. Emodin is then reduced to emodin hydroquinone by the oxidoreductase dmxR7. A-ring reduction by the short chain dehydrogenase dmxR18, dehydration by the scytalone dehydratase-like protein dmxR17 and probable spontaneous re-oxidation, results in overall deoxygenation to chrysophanol. Baeyer-Villiger oxidation by the Baeyer-Villiger monooxygenase (BVMO) dmxR6 then yields monodictylactone in equilibrium with monodictyphenone. In the case of the cryptosporioptides biosynthesis, monodictylactone is reduced at C-12 to an alcohol (by the short chain dehydrogenases dmxR12 or dmxR8) and hydroxylated at C-5 by dmxR9, yielding the electron-rich aromatic which could eliminate H(2)O to form the ortho-quinonemethide, followed by tautomerisation to paraquinone and complete the formal reduction to produce the 10-methylgroup. Conjugate addition of C-4a-OH to the resulting paraquinone by the monooxygenase dmxR10 then gives cyclohexadienone, which is then reduced at C-5 by the short chain dehydrogenase dmxR3 to give the dihydroxanthone. The 6,7-epoxide in the cryptosporioptides could be introduced by the cytochrome P450 monooxygenase dmxL3. The highly reducing PKS dmxL2 manufactures butyrate, which is further carboxylated by dmxL1 to form ethylmalonate. It is not yet clear whether the carboxylation occurs while the butyrate is attached to the ACP of dmxL2, but this unusual fungal metabolite could then be esterified to O-5 by the O-acetyltransferase dmxR13. Finally, dimerization performed by dmxR5 gives the observed dimers cryptosporioptides A, B and C as the final products of the pathway. This chain is Short chain dehydrogenase/reductase dmxR8, found in Cryptosporiopsis sp. (strain 8999).